Consider the following 512-residue polypeptide: Kynurenine 3-monooxygenase (512 aa).

Belongs to the aromatic-ring hydroxylase family. KMO subfamily. FAD serves as cofactor.

It localises to the mitochondrion outer membrane. The enzyme catalyses L-kynurenine + NADPH + O2 + H(+) = 3-hydroxy-L-kynurenine + NADP(+) + H2O. Its pathway is cofactor biosynthesis; NAD(+) biosynthesis; quinolinate from L-kynurenine: step 1/3. Functionally, catalyzes the hydroxylation of L-kynurenine (L-Kyn) to form 3-hydroxy-L-kynurenine (L-3OHKyn). Required for synthesis of quinolinic acid. The polypeptide is Kynurenine 3-monooxygenase (nic-3) (Neurospora crassa (strain ATCC 24698 / 74-OR23-1A / CBS 708.71 / DSM 1257 / FGSC 987)).